A 229-amino-acid polypeptide reads, in one-letter code: uncharacterized protein (229 aa).

A run of 7 helical transmembrane segments spans residues 21–41 (IYSL…LMLY), 56–76 (MIYY…SGAA), 83–103 (ALPI…FIIV), 109–129 (TVFQ…IIGV), 141–161 (AMFA…FIGS), 162–182 (GMMS…LIAS), and 202–222 (WAVA…ISLL).

It belongs to the BI1 family.

It is found in the cell membrane. This is an uncharacterized protein from Streptococcus pyogenes serotype M3 (strain ATCC BAA-595 / MGAS315).